The chain runs to 1131 residues: DNA-directed RNA polymerase subunit beta (1131 aa).

The disordered stretch occupies residues glutamine 1108 to glutamate 1131. Basic and acidic residues predominate over residues leucine 1122–glutamate 1131.

It belongs to the RNA polymerase beta chain family. In terms of assembly, in cyanobacteria the RNAP catalytic core is composed of 2 alpha, 1 beta, 1 beta', 1 gamma and 1 omega subunit. When a sigma factor is associated with the core the holoenzyme is formed, which can initiate transcription.

It carries out the reaction RNA(n) + a ribonucleoside 5'-triphosphate = RNA(n+1) + diphosphate. In terms of biological role, DNA-dependent RNA polymerase catalyzes the transcription of DNA into RNA using the four ribonucleoside triphosphates as substrates. The sequence is that of DNA-directed RNA polymerase subunit beta from Nostoc sp. (strain PCC 7120 / SAG 25.82 / UTEX 2576).